The primary structure comprises 144 residues: Small ribosomal subunit protein eS12 (144 aa).

Belongs to the eukaryotic ribosomal protein eS12 family.

This Trypanosoma brucei brucei protein is Small ribosomal subunit protein eS12 (RPS12).